Here is a 256-residue protein sequence, read N- to C-terminus: Mannose-specific lectin 1 (256 aa).

The signal sequence occupies residues 1-23; sequence MAKLLLFLLPAILGLLVPRSAVA. Bulb-type lectin domains lie at 26 to 131 and 145 to 252; these read TNYL…PWVR and NNLL…SKRS. Residues 51-55, Tyr59, Trp63, Gln64, 170-174, Tyr178, and 182-185 contribute to the beta-D-mannose site; these read QDDCN, QGDCN, and YGWQ. Residues 51–59 carry the Carbohydrate-binding motif 1 motif; that stretch reads QDDCNLVLY. Intrachain disulfides connect Cys54–Cys74 and Cys173–Cys195. The short motif at 170 to 178 is the Carbohydrate-binding motif 2 element; sequence QGDCNLVLY.

In terms of assembly, forms heterodimers.

The protein resides in the secreted. Functionally, mannose-specific lectin. Shows agglutinating activity towards erythrocytes from rabbit. This chain is Mannose-specific lectin 1, found in Remusatia vivipara (Hitchhiker elephant ear).